The primary structure comprises 842 residues: Elongation factor 2 (842 aa).

The 237-residue stretch at 17–253 (TNVRNMSVIA…LWGDSYFNPK (237 aa)) folds into the tr-type G domain. Residues 26–33 (AHVDHGKS), 158–161 (NKVD), and 213–215 (SGL) contribute to the GTP site. Histidine 699 bears the Diphthamide mark.

Belongs to the TRAFAC class translation factor GTPase superfamily. Classic translation factor GTPase family. EF-G/EF-2 subfamily.

Its subcellular location is the cytoplasm. The catalysed reaction is GTP + H2O = GDP + phosphate + H(+). Catalyzes the GTP-dependent ribosomal translocation step during translation elongation. During this step, the ribosome changes from the pre-translocational (PRE) to the post-translocational (POST) state as the newly formed A-site-bound peptidyl-tRNA and P-site-bound deacylated tRNA move to the P and E sites, respectively. Catalyzes the coordinated movement of the two tRNA molecules, the mRNA and conformational changes in the ribosome. The sequence is that of Elongation factor 2 (EFT1) from Eremothecium gossypii (strain ATCC 10895 / CBS 109.51 / FGSC 9923 / NRRL Y-1056) (Yeast).